Consider the following 315-residue polypeptide: ATP synthase gamma chain (315 aa).

As to quaternary structure, F-type ATPases have 2 components, CF(1) - the catalytic core - and CF(0) - the membrane proton channel. CF(1) has five subunits: alpha(3), beta(3), gamma(1), delta(1), epsilon(1). CF(0) has four main subunits: a(1), b(1), b'(1) and c(9-12).

The protein localises to the cellular thylakoid membrane. Produces ATP from ADP in the presence of a proton gradient across the membrane. The gamma chain is believed to be important in regulating ATPase activity and the flow of protons through the CF(0) complex. Its function is as follows. The complex from the organism is particularly stable to disruption and remains functional after 6 hrs at 55 degrees Celsius. This Thermosynechococcus vestitus (strain NIES-2133 / IAM M-273 / BP-1) protein is ATP synthase gamma chain.